The primary structure comprises 613 residues: Histone acetyltransferase KAT7 (613 aa).

Residues 1 to 175 (MAIGVVKRNA…SDLSHRPKRR (175 aa)) form a disordered region. Ser12, Ser52, Ser55, Ser59, and Ser66 each carry phosphoserine. The span at 44–59 (VTRSSARLSQSSQDSS) shows a compositional bias: low complexity. Residues Thr87 and Thr90 each carry the phosphothreonine modification. The segment covering 98–107 (QTRSSGSETE) has biased composition (polar residues). Ser104 carries the phosphoserine modification. Thr106 bears the Phosphothreonine mark. Over residues 112–127 (FSDRETKNTADHDESP) the composition is skewed to basic and acidic residues. 2 positions are modified to phosphoserine: Ser113 and Ser126. Thr130 bears the Phosphothreonine mark. Positions 136–147 (PSSESDIDISSP) are enriched in low complexity. A compositionally biased stretch (basic and acidic residues) spans 150-170 (SHDESIAKDMSLKDSGSDLSH). A phosphoserine mark is found at Ser160, Ser164, Ser166, and Ser180. Residues 178 to 221 (HESYNFNMKCPTPGCNSLGHLTGKHERHFSISGCPLYHNLSADE) form a CCHHC-type zinc finger. Residues Lys201 and Lys279 each carry the N6-acetyllysine modification. Residue Lys325 forms a Glycyl lysine isopeptide (Lys-Gly) (interchain with G-Cter in SUMO2) linkage. In terms of domain architecture, MYST-type HAT spans 334 to 609 (EGSNMIKTIA…MDPSCLKWTP (276 aa)). Lys340 participates in a covalent cross-link: Glycyl lysine isopeptide (Lys-Gly) (interchain with G-Cter in ubiquitin). The segment at 367-392 (LYMCEFCLKYMKSQTILRRHMAKCVW) adopts a C2HC MYST-type zinc-finger fold. The Zn(2+) site is built by Cys370, Cys373, His386, and Cys390. Lys434 carries the post-translational modification N6-acetyllysine; by autocatalysis. Acetyl-CoA is bound by residues 477–479 (ILT) and 485–490 (RQGYGK). Ser508 bears the Phosphoserine mark. Residue Glu510 is the Proton donor/acceptor of the active site. Ser514 and Ser523 together coordinate acetyl-CoA.

Belongs to the MYST (SAS/MOZ) family. As to quaternary structure, component of the HBO1 complex composed of KAT7/HBO1, MEAF6, ING4 or ING5, and one scaffold subunit: complexes containing BRPF scaffold (BRPF1, BRD1/BRPF2 or BRPF3) direct KAT7/HBO1 specificity towards H3K14ac, while complexes containing JADE scaffold (JADE1, JADE2 and JADE3) mediate acetylation of histone H4. Interacts with MCM2 and ORC1. Interacts with the androgen receptor (AR) in the presence of dihydrotestosterone. Interacts with CDT1. Interacts with MAP2K1 and CUL1. Interacts with p53/TP53; leading to inhibit histone acetyltransferase activity. In terms of processing, phosphorylated at Ser-52 and Ser-55 by ATR in response to DNA damage, promoting its ubiquitination by the CRL4(DDB2) complex and subsequent degradation. Phosphorylation at Ser-52 and Ser-55 by ATR in response to ultraviolet-induced DNA, promotes localization to DNA damage sites. Phosphorylation at Ser-59 by PLK1 during mitosis seems important for prereplicative complex formation and DNA replication licensing, and requires prior phosphorylation at Thr-87 and Thr-90 by CDK1. Phosphorylated by MAP2K1, which accelerates its degradation. Ubiquitinated at Lys-340, leading to proteasomal degradation. Ubiquitinated by the CRL4(DDB2) complex following phosphorylation by ATR, leading to its subsequent degradation. Post-translationally, autoacetylation at Lys-434 is required for proper function. Widely expressed in adult tissues.

It is found in the nucleus. It localises to the chromosome. The protein localises to the centromere. Its subcellular location is the cytoplasm. The protein resides in the cytosol. The enzyme catalyses L-lysyl-[protein] + acetyl-CoA = N(6)-acetyl-L-lysyl-[protein] + CoA + H(+). Its activity is regulated as follows. Histone acetyltransferase activity is inhibited by GMNN in the context of a complex with CDT1, inhibiting histone H4 acetylation and DNA replication licensing. Its function is as follows. Catalytic subunit of histone acetyltransferase HBO1 complexes, which specifically mediate acetylation of histone H3 at 'Lys-14' (H3K14ac), thereby regulating various processes, such as gene transcription, protein ubiquitination, immune regulation, stem cell pluripotent and self-renewal maintenance and embryonic development. Some complexes also catalyze acetylation of histone H4 at 'Lys-5', 'Lys-8' and 'Lys-12' (H4K5ac, H4K8ac and H4K12ac, respectively), regulating DNA replication initiation, regulating DNA replication initiation. Specificity of the HBO1 complexes is determined by the scaffold subunit: complexes containing BRPF scaffold (BRPF1, BRD1/BRPF2 or BRPF3) direct KAT7/HBO1 specificity towards H3K14ac, while complexes containing JADE (JADE1, JADE2 and JADE3) scaffold direct KAT7/HBO1 specificity towards histone H4. H3K14ac promotes transcriptional elongation by facilitating the processivity of RNA polymerase II. Acts as a key regulator of hematopoiesis by forming a complex with BRD1/BRPF2, directing KAT7/HBO1 specificity towards H3K14ac and promoting erythroid differentiation. H3K14ac is also required for T-cell development. KAT7/HBO1-mediated acetylation facilitates two consecutive steps, licensing and activation, in DNA replication initiation: H3K14ac facilitates the activation of replication origins, and histone H4 acetylation (H4K5ac, H4K8ac and H4K12ac) facilitates chromatin loading of MCM complexes, promoting DNA replication licensing. Acts as a positive regulator of centromeric CENPA assembly: recruited to centromeres and mediates histone acetylation, thereby preventing centromere inactivation mediated by SUV39H1, possibly by increasing histone turnover/exchange. Involved in nucleotide excision repair: phosphorylation by ATR in response to ultraviolet irradiation promotes its localization to DNA damage sites, where it mediates histone acetylation to facilitate recruitment of XPC at the damaged DNA sites. Acts as an inhibitor of NF-kappa-B independently of its histone acetyltransferase activity. Plays a central role in the maintenance of leukemia stem cells in acute myeloid leukemia (AML). Acts by mediating acetylation of histone H3 at 'Lys-14' (H3K14ac), thereby facilitating the processivity of RNA polymerase II to maintain the high expression of key genes, such as HOXA9 and HOXA10 that help to sustain the functional properties of leukemia stem cells. In Mus musculus (Mouse), this protein is Histone acetyltransferase KAT7.